A 282-amino-acid chain; its full sequence is Tyrosine recombinase XerA (282 aa).

The Core-binding (CB) domain maps to 2–79 (SEPNEVIEEF…ALRAYFRFEG (78 aa)). Residues 95-271 (SLPKALTREE…TVEHLRKAQE (177 aa)) form the Tyr recombinase domain. Catalysis depends on residues R132, K157, H223, R226, and H249. Y258 serves as the catalytic O-(3'-phospho-DNA)-tyrosine intermediate.

This sequence belongs to the 'phage' integrase family. XerA subfamily.

The protein resides in the cytoplasm. In terms of biological role, site-specific tyrosine recombinase, which acts by catalyzing the cutting and rejoining of the recombining DNA molecules. This is Tyrosine recombinase XerA from Thermococcus kodakarensis (strain ATCC BAA-918 / JCM 12380 / KOD1) (Pyrococcus kodakaraensis (strain KOD1)).